The chain runs to 576 residues: MLSDIEISRQSPRLPIHALAERLAIPSHQLHPYGHYKGKLSLELLKSLPKPAGKLVLVSAITPTPLGEGKTVTTLGLSMGLNHIGQPSIATIRQPSLGPVFGVKGGAAGGGHAQVVPMEEMNLHLTGDFHALTAAHNLAAAALDARLFHERKLGDQFSARTGLQRLDIDADNILWPRTLDMNDRALRHLTIGQGNAADGVERSDRFVITAASELMAILALASDLKDLRQRIGRIQLARDLRGKPITAEQLEVAGAMTVLLKEALQPTLMQTTEQTSVLVHAGPFANIAHGNSSVIADRMALGLTDYVVTEAGFGSDMGLEKFFNIKHRQSGITPACVVLVATVRGLKANSGLLDIRPGQPLPESLLREDLPTLEQGCANLGWHIANARRYGVPVVVAINRFPTDSEAELALLARAALRAGACGSAISSAFTQGGAGASELAQAVVAACEQPGKVKLLYPDQASLGAKLATLVECGYGGRGVQLSDKARQQLAQLSAEGWDHLPVCVAKTPLSISHDPALKGVPTDFEVPIEEVKLCAGAGFVYALAGPIMTMPGLGSLPAYRHIDIDDNGEIVGLS.

64 to 71 (TPLGEGKT) lines the ATP pocket.

Belongs to the formate--tetrahydrofolate ligase family.

It carries out the reaction (6S)-5,6,7,8-tetrahydrofolate + formate + ATP = (6R)-10-formyltetrahydrofolate + ADP + phosphate. It functions in the pathway one-carbon metabolism; tetrahydrofolate interconversion. The sequence is that of Formate--tetrahydrofolate ligase from Aeromonas hydrophila subsp. hydrophila (strain ATCC 7966 / DSM 30187 / BCRC 13018 / CCUG 14551 / JCM 1027 / KCTC 2358 / NCIMB 9240 / NCTC 8049).